The following is a 200-amino-acid chain: Large ribosomal subunit protein uL4 (200 aa).

The interval 38–68 (GRQGSKQQKTRSDVRGGGKRPWRQKGTGRAR) is disordered. Residues 54-65 (GGKRPWRQKGTG) are compositionally biased toward basic residues.

Belongs to the universal ribosomal protein uL4 family. As to quaternary structure, part of the 50S ribosomal subunit.

Its function is as follows. One of the primary rRNA binding proteins, this protein initially binds near the 5'-end of the 23S rRNA. It is important during the early stages of 50S assembly. It makes multiple contacts with different domains of the 23S rRNA in the assembled 50S subunit and ribosome. Forms part of the polypeptide exit tunnel. The polypeptide is Large ribosomal subunit protein uL4 (Pseudomonas syringae pv. tomato (strain ATCC BAA-871 / DC3000)).